We begin with the raw amino-acid sequence, 429 residues long: MKLQKPKGTQDILPPESAKWQYVEGFAREIFKRYNYAEVRTPIFEHYEVISRSVGDTTDIVTKEMYDFYDKGDRHITLRPEGTAPVVRSYVENKLFAPEVQKPSKFYYMGPMFRYERPQAGRLRQFHQIGVECFGSSNPATDVETIAMAAHFLKEIGIQGVKLHLNTLGNPESRAAYRQALIDYLTPLKETLSKDSQRRLEENPLRVLDSKEKEDKEAVENAPSILDFLDEESQAHFDAVRQMLENLGVDYIIDTNMVRGLDYYNHTIFEFITEIEGNDLTVCAGGRYDGLVSYFGGPETAGFGFGLGVERLLLILEKQGVTLPIENALDVYIAVLGEGANIKALELVQALRQQGFKAERDYLNRKLKAQFKSADVFVAKTLITLGESEVESGQVTVKNNQTREEVQVSLETISQNFSEIFEKLGFYTQ.

It belongs to the class-II aminoacyl-tRNA synthetase family. As to quaternary structure, homodimer.

It is found in the cytoplasm. The catalysed reaction is tRNA(His) + L-histidine + ATP = L-histidyl-tRNA(His) + AMP + diphosphate + H(+). This Streptococcus pneumoniae (strain CGSP14) protein is Histidine--tRNA ligase.